Here is a 136-residue protein sequence, read N- to C-terminus: Diuretic hormone 41 (136 aa).

A signal peptide spans 1-26 (MMWWAVWCAAMVAGSVFTAAAPPTDS). Residues 27 to 76 (IDLMQMDPSLADDESLGFAMQSLSGRYAAAPWLYLLADVSHDPQNGSDRV) constitute a propeptide that is removed on maturation. Ile-119 carries the post-translational modification Isoleucine amide. Residues 123–136 (GFHWAPSAKAAKFY) constitute a propeptide that is removed on maturation.

This sequence belongs to the sauvagine/corticotropin-releasing factor/urotensin I family.

Its subcellular location is the secreted. Its function is as follows. Regulation of fluid secretion. In Bombyx mori (Silk moth), this protein is Diuretic hormone 41 (dh41).